Reading from the N-terminus, the 175-residue chain is Anterior gradient protein 2 homolog (175 aa).

Residues 1–20 (MEKFSVSAILLLVAISGTLA) form the signal peptide. A required to promote cell adhesion region spans residues 21–40 (KDTTVKSGAKKDPKDSRPKL). A disordered region spans residues 24–44 (TVKSGAKKDPKDSRPKLPQTL). The segment covering 29–38 (AKKDPKDSRP) has biased composition (basic and acidic residues). Short sequence motifs (homodimer stabilization; interchain) lie at residues 45–54 (SRGWGDQLIW) and 60–67 (EALYRSKT).

This sequence belongs to the AGR family. Monomer and homodimer. Interacts with LYPD3 and DAG1 (alphaDAG1). Interacts with MUC2; disulfide-linked. Expressed in lung, skeletal muscle, testis, liver, stomach, colon, small intestine, the goblet cells of the intestine and the mucuous neck cells of the stomach.

It localises to the secreted. Its subcellular location is the endoplasmic reticulum. Its function is as follows. Required for MUC2 post-transcriptional synthesis and secretion. May play a role in the production of mucus by intestinal cells. Proto-oncogene that may play a role in cell migration, cell differentiation and cell growth. Promotes cell adhesion. The protein is Anterior gradient protein 2 homolog (Agr2) of Mus musculus (Mouse).